A 169-amino-acid chain; its full sequence is Cell division inhibitor SulA (169 aa).

Residues 106–112 are ftsZ binding; the sequence is ALRTGNY. Residues 162-169 are lon protease binding; the sequence is KIHSNLYH.

It belongs to the SulA family. Interacts with FtsZ. Post-translationally, is rapidly cleaved and degraded by the Lon protease once DNA damage is repaired.

Its function is as follows. Component of the SOS system and an inhibitor of cell division. Accumulation of SulA causes rapid cessation of cell division and the appearance of long, non-septate filaments. In the presence of GTP, binds a polymerization-competent form of FtsZ in a 1:1 ratio, thus inhibiting FtsZ polymerization and therefore preventing it from participating in the assembly of the Z ring. This mechanism prevents the premature segregation of damaged DNA to daughter cells during cell division. The chain is Cell division inhibitor SulA from Shigella boydii serotype 18 (strain CDC 3083-94 / BS512).